The primary structure comprises 307 residues: Methionyl-tRNA formyltransferase (307 aa).

108–111 (SLLP) contributes to the (6S)-5,6,7,8-tetrahydrofolate binding site.

Belongs to the Fmt family.

The enzyme catalyses L-methionyl-tRNA(fMet) + (6R)-10-formyltetrahydrofolate = N-formyl-L-methionyl-tRNA(fMet) + (6S)-5,6,7,8-tetrahydrofolate + H(+). In terms of biological role, attaches a formyl group to the free amino group of methionyl-tRNA(fMet). The formyl group appears to play a dual role in the initiator identity of N-formylmethionyl-tRNA by promoting its recognition by IF2 and preventing the misappropriation of this tRNA by the elongation apparatus. The polypeptide is Methionyl-tRNA formyltransferase (Stenotrophomonas maltophilia (strain R551-3)).